A 290-amino-acid chain; its full sequence is MASITLTPSEKDIQAFLEHYQTSLAPSKNPYIRYFLKLPQATVSIYTSGKILLQGEGAEKYASFFGYQAVEQTSGQNLPLIGTDEVGNGSYFGGLAVVAAFVTPDQHDFLRKLGVGDSKTLTDQKIRQIAPILKEKIQHQALLLSPSKYNEVIGDRYNAVSVKVALHNQAIYLLLQKGVQPEKIVIDAFTSAKNYDKYLAQETNRFSNPISLEEKAEGKYLAVAVSSVIARDLFLENLENLGRELGYQLPSGAGTASDKVASQILQAYGMQGLNFCAKLHFKNTEKAKNA.

Positions 78–290 (LPLIGTDEVG…FKNTEKAKNA (213 aa)) constitute an RNase H type-2 domain. A divalent metal cation contacts are provided by D84, E85, and D187.

This sequence belongs to the RNase HII family. RnhC subfamily. Mn(2+) serves as cofactor. Mg(2+) is required as a cofactor.

The protein resides in the cytoplasm. The enzyme catalyses Endonucleolytic cleavage to 5'-phosphomonoester.. Its function is as follows. Endonuclease that specifically degrades the RNA of RNA-DNA hybrids. This chain is Ribonuclease HIII, found in Streptococcus pneumoniae serotype 2 (strain D39 / NCTC 7466).